The primary structure comprises 255 residues: Small ribosomal subunit protein eS1 (255 aa).

Residues Met1 to Lys18 show a composition bias toward basic residues. The tract at residues Met1 to Asp28 is disordered. At Ala2 the chain carries N-acetylalanine; partial. A compositionally biased stretch (basic and acidic residues) spans Arg19–Asp28.

The protein belongs to the eukaryotic ribosomal protein eS1 family. In terms of assembly, component of the small ribosomal subunit. Mature ribosomes consist of a small (40S) and a large (60S) subunit. The 40S subunit contains about 33 different proteins and 1 molecule of RNA (18S). The 60S subunit contains about 49 different proteins and 3 molecules of RNA (25S, 5.8S and 5S).

It is found in the cytoplasm. This is Small ribosomal subunit protein eS1 from Ajellomyces capsulatus (strain H143) (Darling's disease fungus).